A 561-amino-acid polypeptide reads, in one-letter code: Hemolysin transporter protein HpmB (561 aa).

The N-terminal stretch at Met-1 to Ser-17 is a signal peptide. One can recognise a POTRA domain in the interval Leu-77–Gly-150.

This sequence belongs to the TPS (TC 1.B.20) family.

The protein localises to the cell outer membrane. Its function is as follows. Interacts with the cell-bound hemolysin. Necessary for the extracellular secretion and activation of the hemolysin. In terms of biological role, probable member of a two partner secretion pathway (TPS) in which it mediates the secretion of hemolysin. The polypeptide is Hemolysin transporter protein HpmB (hpmB) (Proteus mirabilis).